A 147-amino-acid chain; its full sequence is 6-pyruvoyl tetrahydrobiopterin synthase (147 aa).

A Zn(2+)-binding site is contributed by His26. The Proton acceptor role is filled by Cys45. Zn(2+)-binding residues include His51 and His53. Catalysis depends on charge relay system residues His92 and Glu136.

This sequence belongs to the PTPS family. As to quaternary structure, homohexamer formed of two homotrimers in a head to head fashion. Zn(2+) is required as a cofactor.

It catalyses the reaction 7,8-dihydroneopterin 3'-triphosphate = 6-pyruvoyl-5,6,7,8-tetrahydropterin + triphosphate + H(+). It participates in cofactor biosynthesis; tetrahydrobiopterin biosynthesis; tetrahydrobiopterin from 7,8-dihydroneopterin triphosphate: step 1/3. Its function is as follows. Involved in the biosynthesis of tetrahydrobiopterin, an essential cofactor of aromatic amino acid hydroxylases. Catalyzes the transformation of 7,8-dihydroneopterin triphosphate into 6-pyruvoyl tetrahydropterin. This chain is 6-pyruvoyl tetrahydrobiopterin synthase (pts), found in Poecilia reticulata (Guppy).